A 697-amino-acid polypeptide reads, in one-letter code: Putative cryptochrome DASH (697 aa).

Positions K5–Y164 constitute a Photolyase/cryptochrome alpha/beta domain. Disordered stretches follow at residues D170 to W215 and F554 to I697. Residues K188–R198 show a composition bias toward basic and acidic residues. Positions R560 to R569 are enriched in basic residues. Positions G578 to S590 are enriched in gly residues. Low complexity-rich tracts occupy residues Q659–Q675 and R683–I697.

This sequence belongs to the DNA photolyase class-1 family. FAD is required as a cofactor. It depends on (6R)-5,10-methylene-5,6,7,8-tetrahydrofolate as a cofactor.

In terms of biological role, may have a photoreceptor function. This is Putative cryptochrome DASH from Gibberella zeae (strain ATCC MYA-4620 / CBS 123657 / FGSC 9075 / NRRL 31084 / PH-1) (Wheat head blight fungus).